A 108-amino-acid polypeptide reads, in one-letter code: L-rhamnose mutarotase (108 aa).

Tyr-19 serves as a coordination point for substrate. His-23 acts as the Proton donor in catalysis. Residues Tyr-45 and 80-81 (WW) each bind substrate.

The protein belongs to the rhamnose mutarotase family. As to quaternary structure, homodimer.

It is found in the cytoplasm. The enzyme catalyses alpha-L-rhamnose = beta-L-rhamnose. It functions in the pathway carbohydrate metabolism; L-rhamnose metabolism. Its function is as follows. Involved in the anomeric conversion of L-rhamnose. In Ligilactobacillus salivarius (strain UCC118) (Lactobacillus salivarius), this protein is L-rhamnose mutarotase.